Reading from the N-terminus, the 208-residue chain is Protein-L-isoaspartate O-methyltransferase (208 aa).

Residue Ser-59 is part of the active site.

Belongs to the methyltransferase superfamily. L-isoaspartyl/D-aspartyl protein methyltransferase family.

It localises to the cytoplasm. The catalysed reaction is [protein]-L-isoaspartate + S-adenosyl-L-methionine = [protein]-L-isoaspartate alpha-methyl ester + S-adenosyl-L-homocysteine. Functionally, catalyzes the methyl esterification of L-isoaspartyl residues in peptides and proteins that result from spontaneous decomposition of normal L-aspartyl and L-asparaginyl residues. It plays a role in the repair and/or degradation of damaged proteins. The sequence is that of Protein-L-isoaspartate O-methyltransferase from Vibrio campbellii (strain ATCC BAA-1116).